Consider the following 313-residue polypeptide: MSSLAKLGYFFDEKGVLKTEKDKKPFKFTTQEDYEELGEAVDLEVYELLETRCGLKRKALKLPGKTDEDEDLSFIFVSKNFKKAANLLVLIHGSGVVRAGQWARRLIINDNLECGTQIPYIERAIENGWGVVVMNTNLNESKDQDLKYSRTPVEHAETVWIACIEPSNAKSIYVVAHSRGGYDTASVLKKFGGDDRISKICLTDSPWFEFPKSCAQRARPLFVVNFLAHGALNSPSYKVREYREGNVAELWAGTQIHEWSSHCAIDAVFHILETEMTPSNYAEVMEEAKKLVVKSENSKESDDEAPKSKKICV.

Residues 293–313 form a disordered region; the sequence is VKSENSKESDDEAPKSKKICV. Basic and acidic residues predominate over residues 296–307; the sequence is ENSKESDDEAPK.

Belongs to the FAM172 family.

The polypeptide is FAM172 family protein homolog Y75B8A.31 (Caenorhabditis elegans).